Consider the following 942-residue polypeptide: UvrABC system protein A (942 aa).

Residue 31–38 (GLSGSGKS) coordinates ATP. Residues 253 to 280 (CSECGYSLPELEPRLFSFNNPAGACPTC) form a C4-type zinc finger. 2 ABC transporter domains span residues 310–586 (WDRR…EASI) and 606–936 (YDAN…RFLT). 639–646 (GVSGSGKS) is an ATP binding site. The C4-type zinc finger occupies 739–765 (CEACQGDGVIKVEMHFLPDVYVPCDHC).

Belongs to the ABC transporter superfamily. UvrA family. Forms a heterotetramer with UvrB during the search for lesions.

It localises to the cytoplasm. Functionally, the UvrABC repair system catalyzes the recognition and processing of DNA lesions. UvrA is an ATPase and a DNA-binding protein. A damage recognition complex composed of 2 UvrA and 2 UvrB subunits scans DNA for abnormalities. When the presence of a lesion has been verified by UvrB, the UvrA molecules dissociate. The polypeptide is UvrABC system protein A (Haemophilus ducreyi (strain 35000HP / ATCC 700724)).